The sequence spans 49 residues: Large ribosomal subunit protein eL40 (49 aa).

Belongs to the eukaryotic ribosomal protein eL40 family.

The polypeptide is Large ribosomal subunit protein eL40 (Methanosarcina acetivorans (strain ATCC 35395 / DSM 2834 / JCM 12185 / C2A)).